A 71-amino-acid polypeptide reads, in one-letter code: uncharacterized protein (71 aa).

In terms of domain architecture, HTH cro/C1-type spans 5–59; the sequence is IKEFRAKFNMTQEELAKRVGVRRETIVFLEKGKYNPSLKLAYKIARVFNAKIEDI. The segment at residues 16 to 35 is a DNA-binding region (H-T-H motif); the sequence is QEELAKRVGVRRETIVFLEK.

This is an uncharacterized protein from Archaeoglobus fulgidus (strain ATCC 49558 / DSM 4304 / JCM 9628 / NBRC 100126 / VC-16).